Reading from the N-terminus, the 143-residue chain is Putative pre-16S rRNA nuclease (143 aa).

This sequence belongs to the YqgF nuclease family.

The protein resides in the cytoplasm. Could be a nuclease involved in processing of the 5'-end of pre-16S rRNA. This is Putative pre-16S rRNA nuclease from Mycoplasma capricolum subsp. capricolum (strain California kid / ATCC 27343 / NCTC 10154).